A 115-amino-acid polypeptide reads, in one-letter code: MLGLLGSTALVGWITGAAVAVLLLLLLLATCLFHGRQDCDVERNRTAAGGNRVRRAQPWPFRRRGHLGIFHHHRHPGHVSHVPNVGLHHHHHPRHTPHHLHHHHHPHRHHPRHAR.

A helical transmembrane segment spans residues Ala9–Ala29. The tract at residues Gly86–Arg115 is disordered. Over residues Leu87–Arg115 the composition is skewed to basic residues.

Its subcellular location is the membrane. The sequence is that of Histidine-rich carboxyl terminus protein 1 (HRCT1) from Homo sapiens (Human).